The chain runs to 306 residues: Pyridoxal 5'-phosphate synthase subunit PdxS (306 aa).

Asp-36 contacts D-ribose 5-phosphate. The Schiff-base intermediate with D-ribose 5-phosphate role is filled by Lys-93. Residue Gly-165 coordinates D-ribose 5-phosphate. Arg-177 provides a ligand contact to D-glyceraldehyde 3-phosphate. D-ribose 5-phosphate is bound by residues Gly-226 and Gly-247–Ser-248.

This sequence belongs to the PdxS/SNZ family. As to quaternary structure, in the presence of PdxT, forms a dodecamer of heterodimers.

It catalyses the reaction aldehydo-D-ribose 5-phosphate + D-glyceraldehyde 3-phosphate + L-glutamine = pyridoxal 5'-phosphate + L-glutamate + phosphate + 3 H2O + H(+). The protein operates within cofactor biosynthesis; pyridoxal 5'-phosphate biosynthesis. In terms of biological role, catalyzes the formation of pyridoxal 5'-phosphate from ribose 5-phosphate (RBP), glyceraldehyde 3-phosphate (G3P) and ammonia. The ammonia is provided by the PdxT subunit. Can also use ribulose 5-phosphate and dihydroxyacetone phosphate as substrates, resulting from enzyme-catalyzed isomerization of RBP and G3P, respectively. The polypeptide is Pyridoxal 5'-phosphate synthase subunit PdxS (Nocardia farcinica (strain IFM 10152)).